We begin with the raw amino-acid sequence, 268 residues long: Enoyl-[acyl-carrier-protein] reductase [NADH] (268 aa).

Residues 20–21, 64–65, and 95–96 contribute to the NAD(+) site; these read SI, DV, and IA. Y157 contacts substrate. Residues K164 and I193 each contribute to the NAD(+) site.

It belongs to the short-chain dehydrogenases/reductases (SDR) family. FabI subfamily. As to quaternary structure, homodimer. Homotetramer.

The enzyme catalyses a 2,3-saturated acyl-[ACP] + NAD(+) = a (2E)-enoyl-[ACP] + NADH + H(+). It catalyses the reaction a 2,3-saturated acyl-CoA + NAD(+) = a (2E)-enoyl-CoA + NADH + H(+). Its pathway is lipid metabolism; mycolic acid biosynthesis. In terms of biological role, enoyl-ACP reductase of the type II fatty acid syntase (FAS-II) system, which is involved in the biosynthesis of mycolic acids, a major component of mycobacterial cell walls. Catalyzes the NADH-dependent reduction of the double bond of 2-trans-enoyl-[acyl-carrier protein], an essential step in the fatty acid elongation cycle of the FAS-II pathway. Shows preference for long-chain fatty acyl thioester substrates, and can also use 2-trans-enoyl-CoAs as alternative substrates. The mycobacterial FAS-II system utilizes the products of the FAS-I system as primers to extend fatty acyl chain lengths up to C56, forming the meromycolate chain that serves as the precursor for final mycolic acids. This Mycobacterium avium protein is Enoyl-[acyl-carrier-protein] reductase [NADH].